Consider the following 149-residue polypeptide: Oligosaccharyltransferase complex subunit ostc-B (149 aa).

Over 1 to 32 (MESLYRIPFTVLECPNLKLKKPSWLHMPSAMT) the chain is Cytoplasmic. The chain crosses the membrane as a helical span at residues 33 to 53 (VYAMVVVSYFLITGGIIYDVI). The Extracellular portion of the chain corresponds to 54–83 (VEPPSVGSMTDEHGHQRPVAFLAYRVNGQY). The chain crosses the membrane as a helical span at residues 84 to 104 (IMEGLASSFLFTMGGLGFIIL). Residues 105–117 (DRSNAPNIPKLNR) are Cytoplasmic-facing. The chain crosses the membrane as a helical span at residues 118-138 (FLLLFIGFVCVLLSFFMARVF). The Extracellular segment spans residues 139–149 (MRMKLPGYLMG).

Belongs to the OSTC family. In terms of assembly, specific component of the STT3A-containing form of the oligosaccharyltransferase (OST) complex.

Its subcellular location is the membrane. Its pathway is protein modification; protein glycosylation. Specific component of the STT3A-containing form of the oligosaccharyl transferase (OST) complex that catalyzes the initial transfer of a defined glycan (Glc(3)Man(9)GlcNAc(2) in eukaryotes) from the lipid carrier dolichol-pyrophosphate to an asparagine residue within an Asn-X-Ser/Thr consensus motif in nascent polypeptide chains, the first step in protein N-glycosylation. N-glycosylation occurs cotranslationally and the complex associates with the Sec61 complex at the channel-forming translocon complex that mediates protein translocation across the endoplasmic reticulum (ER). All subunits are required for a maximal enzyme activity. This is Oligosaccharyltransferase complex subunit ostc-B from Xenopus laevis (African clawed frog).